Reading from the N-terminus, the 310-residue chain is 5'-adenylylsulfate reductase-like 4 (310 aa).

A signal peptide spans 1–22 (MEKEILLLLLVIMFLTVADVDA). In terms of domain architecture, Thioredoxin spans 49–168 (GVESDERPRF…LVAFYSDVTG (120 aa)). N-linked (GlcNAc...) asparagine glycosylation is found at asparagine 143 and asparagine 190. Residues 217-237 (LAIVFVLLRLLHLIYPTLVVF) traverse the membrane as a helical segment.

The protein localises to the membrane. The polypeptide is 5'-adenylylsulfate reductase-like 4 (APRL4) (Arabidopsis thaliana (Mouse-ear cress)).